Here is a 148-residue protein sequence, read N- to C-terminus: Natriuretic peptide BF131 (148 aa).

The N-terminal stretch at Met1 to Gly27 is a signal peptide. Positions Lys28–Gln83 are excised as a propeptide. Disordered stretches follow at residues Leu54–Gln83 and Thr105–Ala127. Over residues Ala63–Gln83 the composition is skewed to basic and acidic residues. An intrachain disulfide couples Cys94 to Cys110. A propeptide spanning residues Ala130–Ala148 is cleaved from the precursor.

The protein belongs to the natriuretic peptide family. Expressed by the venom gland.

Its subcellular location is the secreted. Functionally, natriuretic peptide that dose-dependently induces the rapid relaxation of rat aortic strips phenylephrine-precontracted. Acts by stimulating cGMP production in a dose-dependent manner (by probably activating NPR1 and/or NPR2). May also show potent hypotensive effects. This Bungarus flaviceps flaviceps (Red-headed krait) protein is Natriuretic peptide BF131.